The primary structure comprises 209 residues: High frequency lysogenization protein HflD homolog (209 aa).

The protein belongs to the HflD family.

It is found in the cytoplasm. The protein localises to the cell inner membrane. In Proteus mirabilis (strain HI4320), this protein is High frequency lysogenization protein HflD homolog.